A 624-amino-acid chain; its full sequence is Glutamine--fructose-6-phosphate aminotransferase [isomerizing] (624 aa).

Cysteine 2 acts as the Nucleophile; for GATase activity in catalysis. The Glutamine amidotransferase type-2 domain maps to 2 to 226; that stretch reads CGIVGYVGQQ…QDQAVVLTAD (225 aa). SIS domains are found at residues 297–436 and 469–614; these read SDQE…ARGT and LAQR…VDKP. The active-site For Fru-6P isomerization activity is the lysine 619.

As to quaternary structure, homodimer.

The protein localises to the cytoplasm. The enzyme catalyses D-fructose 6-phosphate + L-glutamine = D-glucosamine 6-phosphate + L-glutamate. Its function is as follows. Catalyzes the first step in hexosamine metabolism, converting fructose-6P into glucosamine-6P using glutamine as a nitrogen source. The chain is Glutamine--fructose-6-phosphate aminotransferase [isomerizing] from Mycolicibacterium paratuberculosis (strain ATCC BAA-968 / K-10) (Mycobacterium paratuberculosis).